The sequence spans 197 residues: Imidazoleglycerol-phosphate dehydratase (197 aa).

It belongs to the imidazoleglycerol-phosphate dehydratase family.

The protein resides in the cytoplasm. It carries out the reaction D-erythro-1-(imidazol-4-yl)glycerol 3-phosphate = 3-(imidazol-4-yl)-2-oxopropyl phosphate + H2O. It participates in amino-acid biosynthesis; L-histidine biosynthesis; L-histidine from 5-phospho-alpha-D-ribose 1-diphosphate: step 6/9. The sequence is that of Imidazoleglycerol-phosphate dehydratase from Thermobifida fusca (strain YX).